A 180-amino-acid chain; its full sequence is Regulator of G-protein signaling 8 (180 aa).

Ser26 carries the post-translational modification Phosphoserine. Positions 56-171 (SFDVLLSHKY…FLRSKMYLDL (116 aa)) constitute an RGS domain.

In terms of assembly, interacts with GNAO1. Interacts with GNAI3.

Its subcellular location is the cell membrane. It is found in the membrane. The protein resides in the perikaryon. It localises to the cell projection. The protein localises to the dendrite. Its subcellular location is the nucleus. Functionally, regulates G protein-coupled receptor signaling cascades, including signaling via muscarinic acetylcholine receptor CHRM2 and dopamine receptor DRD2. Inhibits signal transduction by increasing the GTPase activity of G protein alpha subunits, thereby driving them into their inactive GDP-bound form. Modulates the activity of potassium channels that are activated in response to DRD2 and CHRM2 signaling. The protein is Regulator of G-protein signaling 8 (RGS8) of Homo sapiens (Human).